The chain runs to 702 residues: MA3 DOMAIN-CONTAINING TRANSLATION REGULATORY FACTOR 1 (702 aa).

The disordered stretch occupies residues 39–66 (LNIKSPTGGKGPVAGIPNRHVRRTHSGK). The span at 57–66 (RHVRRTHSGK) shows a compositional bias: basic residues. The MI 1 domain maps to 122–243 (DYKKSVVSII…PPVFLVRSKK (122 aa)). Positions 273-280 (EKKWGGST) match the Nuclear localization signal 1 motif. 3 consecutive MI domains span residues 286–407 (ETKK…TSDQ), 420–541 (QYKK…DIST), and 583–702 (DAKD…SATQ). Positions 458–465 (LKRLITLA) match the Nuclear localization signal 2 motif.

It belongs to the PDCD4 family. Binds to EIF4A1, S6K1 and S6K2. The association with ribosomes is modulated by cellular energy status and TOR activity. Post-translationally, phosphorylation by S6 kinases (e.g. S6K1 and S6K2) is modulated by cellular energy status and TOR activity. In terms of tissue distribution, mostly expressed in vegetative tissues, such as leaves, roots and stems, and, to a lower extent, in reproductive tissues, such as flower buds and flowers.

The protein resides in the nucleus. It localises to the cytoplasm. Its subcellular location is the cytosol. In terms of biological role, involved in target of rapamycin (TOR)-regulated translation control, especially under energy-deficient conditions. This chain is MA3 DOMAIN-CONTAINING TRANSLATION REGULATORY FACTOR 1, found in Arabidopsis thaliana (Mouse-ear cress).